The sequence spans 205 residues: Transcription termination/antitermination protein NusG (205 aa).

A KOW domain is found at 154–178 (GDHIMVLSGPFKDFEGDVIEVSPER).

It belongs to the NusG family.

In terms of biological role, participates in transcription elongation, termination and antitermination. The sequence is that of Transcription termination/antitermination protein NusG from Synechocystis sp. (strain ATCC 27184 / PCC 6803 / Kazusa).